A 262-amino-acid polypeptide reads, in one-letter code: 14-3-3 protein I (262 aa).

The protein belongs to the 14-3-3 family. In terms of assembly, homodimer. Forms a complex composed of CDPK1, PKA regulatory subunit PKAr and 14-3-3I; the complex is formed in merozoites in response to low extracellular level of K(+) and may play a role in microneme secretion. Interacts with CDPK1 (when phosphorylated) in a Ca(2+)-independent manner; the interaction does not regulate CDPK1 catalytic activity but is required for merozoite invasion of host erythrocytes. Interacts with PKA regulatory subunit PKAr (when phosphorylated) in a Ca(2+)-dependent manner. Interacts with histone H3 (when phosphorylated at 'Ser-28' or when phosphorylated at 'Ser-28' and 'Ser-32').

Its subcellular location is the cell membrane. It is found in the cytoplasm. It localises to the nucleus. Functionally, adapter protein which binds to its partners, usually via a phosphoserine or phosphothreonine motif. Binding generally results in the modulation of the activity and/or cellular localization of the binding partner. Via its interaction with CDPK1 and PKAr, involved in merozoite microneme secretion and thus in merozoite invasion of host erythrocytes. The sequence is that of 14-3-3 protein I from Plasmodium falciparum (isolate 3D7).